Consider the following 446-residue polypeptide: tRNA-2-methylthio-N(6)-dimethylallyladenosine synthase (446 aa).

In terms of domain architecture, MTTase N-terminal spans 2–122; that stretch reads KKAYVKSYGC…LPDLLRQSRE (121 aa). [4Fe-4S] cluster is bound by residues Cys11, Cys47, Cys85, Cys157, Cys161, and Cys164. The Radical SAM core domain occupies 143 to 375; it reads RNRGVTGFLT…QDLLDRQRHA (233 aa). Positions 378 to 440 constitute a TRAM domain; that stretch reads AASVGTLTEI…SNSLFGEALE (63 aa).

It belongs to the methylthiotransferase family. MiaB subfamily. In terms of assembly, monomer. Requires [4Fe-4S] cluster as cofactor.

It is found in the cytoplasm. It catalyses the reaction N(6)-dimethylallyladenosine(37) in tRNA + (sulfur carrier)-SH + AH2 + 2 S-adenosyl-L-methionine = 2-methylsulfanyl-N(6)-dimethylallyladenosine(37) in tRNA + (sulfur carrier)-H + 5'-deoxyadenosine + L-methionine + A + S-adenosyl-L-homocysteine + 2 H(+). Functionally, catalyzes the methylthiolation of N6-(dimethylallyl)adenosine (i(6)A), leading to the formation of 2-methylthio-N6-(dimethylallyl)adenosine (ms(2)i(6)A) at position 37 in tRNAs that read codons beginning with uridine. The chain is tRNA-2-methylthio-N(6)-dimethylallyladenosine synthase from Methylorubrum extorquens (strain CM4 / NCIMB 13688) (Methylobacterium extorquens).